Consider the following 120-residue polypeptide: Alanine racemase (120 aa).

Catalysis depends on tyrosine 24, which acts as the Proton acceptor; specific for L-alanine.

It belongs to the alanine racemase family. Homodimer. Pyridoxal 5'-phosphate serves as cofactor.

It carries out the reaction L-alanine = D-alanine. In terms of biological role, highly specific to D- and L-alanine and does not catalyze the racemization of other amino acids. The protein is Alanine racemase of Penaeus monodon (Giant tiger prawn).